A 268-amino-acid chain; its full sequence is Probable RNA methyltransferase C2A9.10 (268 aa).

The region spanning 23–258 (DPRLKCLPDS…RTMYIYKKKG (236 aa)) is the Bin3-type SAM domain.

This sequence belongs to the methyltransferase superfamily.

Probable RNA methyltransferase. This Schizosaccharomyces pombe (strain 972 / ATCC 24843) (Fission yeast) protein is Probable RNA methyltransferase C2A9.10.